A 274-amino-acid polypeptide reads, in one-letter code: Large ribosomal subunit protein uL2 (274 aa).

Disordered regions lie at residues 21–59 and 224–274; these read KVGLSKDEPEKSLTSGKKSSGGRNNHGRITTRHRGGGHK and AMNP…QLKG. Low complexity predominate over residues 32–42; it reads SLTSGKKSSGG. The span at 45 to 59 shows a compositional bias: basic residues; the sequence is NHGRITTRHRGGGHK. A compositionally biased stretch (basic and acidic residues) spans 263 to 274; the sequence is KSSDKYIKQLKG.

Belongs to the universal ribosomal protein uL2 family. Part of the 50S ribosomal subunit. Forms a bridge to the 30S subunit in the 70S ribosome.

In terms of biological role, one of the primary rRNA binding proteins. Required for association of the 30S and 50S subunits to form the 70S ribosome, for tRNA binding and peptide bond formation. It has been suggested to have peptidyltransferase activity; this is somewhat controversial. Makes several contacts with the 16S rRNA in the 70S ribosome. This is Large ribosomal subunit protein uL2 from Wolbachia pipientis wMel.